The primary structure comprises 184 residues: Probable RNA 2'-phosphotransferase (184 aa).

This sequence belongs to the KptA/TPT1 family.

Removes the 2'-phosphate from RNA via an intermediate in which the phosphate is ADP-ribosylated by NAD followed by a presumed transesterification to release the RNA and generate ADP-ribose 1''-2''-cyclic phosphate (APPR&gt;P). May function as an ADP-ribosylase. The chain is Probable RNA 2'-phosphotransferase from Rhizobium leguminosarum bv. trifolii (strain WSM2304).